The sequence spans 844 residues: DNA mismatch repair protein MutS (844 aa).

Residue 610–617 (GPNMGGKS) participates in ATP binding.

This sequence belongs to the DNA mismatch repair MutS family.

Its function is as follows. This protein is involved in the repair of mismatches in DNA. It is possible that it carries out the mismatch recognition step. This protein has a weak ATPase activity. The chain is DNA mismatch repair protein MutS from Francisella tularensis subsp. novicida (strain U112).